The following is a 189-amino-acid chain: RPW8-like protein 1 (189 aa).

Residues 1–153 (MPLVELLTSA…ITRQPMDIIE (153 aa)) form the RPW8 domain. Residues 7-24 (LTSAALGLSLQLLHDAII) form a helical membrane-spanning segment. Coiled coils occupy residues 65 to 92 (FRKV…LKLR) and 126 to 147 (DIKK…ITRQ). N-linked (GlcNAc...) asparagine glycosylation is present at asparagine 177.

Belongs to the plant RPW8 protein family.

The protein localises to the membrane. Its function is as follows. Probable disease resistance (R) protein. In Arabidopsis thaliana (Mouse-ear cress), this protein is RPW8-like protein 1.